Here is a 210-residue protein sequence, read N- to C-terminus: MATIFDILNTLNNNNNNNNFENCKRQCPINKSNKTIIDKLPPMDVTMTNDKLIIETELAGISKDHIEIDIKDSILTIQGEKKKNLNKQQQQLVIEKSTSSSTLDSKEDEPSIEEFEDDIKPKSKSDNTTVSTTTTATTKENKEDENKTKSTDKKFISERSFGNFKRYLDLTKILYQLDLNSINTQFENGLLTITINKKLHYSNTIKININ.

Residues 34–210 (KTIIDKLPPM…YSNTIKININ (177 aa)) form the sHSP domain. The interval 93–151 (VIEKSTSSSTLDSKEDEPSIEEFEDDIKPKSKSDNTTVSTTTTATTKENKEDENKTKST) is disordered. Residues 126–138 (DNTTVSTTTTATT) show a composition bias toward low complexity. The segment covering 139–151 (KENKEDENKTKST) has biased composition (basic and acidic residues).

Belongs to the small heat shock protein (HSP20) family.

The polypeptide is Small heat shock protein hspG6 (hspG6) (Dictyostelium discoideum (Social amoeba)).